Reading from the N-terminus, the 427-residue chain is Neuronal pentraxin-2 (427 aa).

A signal peptide spans 1 to 17; that stretch reads MLALLAAGVAFAVVVLA. 2 N-linked (GlcNAc...) asparagine glycosylation sites follow: Asn144 and Asn185. Residues 219 to 420 form the Pentraxin (PTX) domain; that stretch reads DAFKVSLPFR…GASKWPVETC (202 aa). A disulfide bond links Cys249 and Cys309. The Ca(2+) site is built by Asn273, Glu351, Gln352, Asp353, and Gln363. N-linked (GlcNAc...) asparagine glycosylation is present at Asn389.

Homooligomer or heterooligomer (probably pentamer) with neuronal pentraxin receptor (NPTXR). Ca(2+) serves as cofactor. In terms of tissue distribution, testis specific.

Its subcellular location is the cytoplasmic vesicle. It is found in the secretory vesicle. The protein localises to the acrosome lumen. In terms of biological role, may be involved in binding, concentrating, and sorting soluble glycoproteins or glycolipids that are destined for the acrosome. In Cavia porcellus (Guinea pig), this protein is Neuronal pentraxin-2 (NPTX2).